A 315-amino-acid chain; its full sequence is BTB/POZ domain-containing adapter for CUL3-mediated RhoA degradation protein 3 (315 aa).

Met1 is modified (N-acetylmethionine). At Ser23 the chain carries Phosphoserine. The BTB domain occupies 32–100 (KYVKLNVGGA…LRDGAVPLPE (69 aa)). The Interaction with PCNA motif lies at 239–245 (QTKVEFP). Residues 269–294 (NALLEATGGAAGRSHHLDEDEERERE) form a disordered region.

The protein belongs to the BACURD family. Homotetramer; forms a two-fold symmetric tetramer in solution. Interacts with CUL3; interaction is direct and forms a 5:5 heterodecamer. Component of the BCR(BACURD3) E3 ubiquitin ligase complex, at least composed of CUL3, KCTD10/BACURD3 and RBX1. Interacts with DNA polymerase delta subunit 2/POLD2. Interacts with PCNA. Expressed at highest levels in lung. Also detected in testis and heart. Very low expression, if any, in brain, liver, spleen, kidney and skeletal muscle.

Its subcellular location is the nucleus. It functions in the pathway protein modification; protein ubiquitination. In terms of biological role, substrate-specific adapter of a BCR (BTB-CUL3-RBX1) E3 ubiquitin-protein ligase complex. The BCR(BACURD3) E3 ubiquitin ligase complex mediates the ubiquitination of target proteins, leading to their degradation by the proteasome. This is BTB/POZ domain-containing adapter for CUL3-mediated RhoA degradation protein 3 (Kctd10) from Rattus norvegicus (Rat).